The following is a 429-amino-acid chain: Arsenical pump membrane protein (429 aa).

Transmembrane regions (helical) follow at residues 24 to 44 (IGWS…IHIA), 46 to 66 (IPVV…VIII), 98 to 118 (IVLL…ALIL), 121 to 141 (IVIA…AFVM), 178 to 198 (VMVP…HLFF), 228 to 248 (WVVL…GIPV), 249 to 269 (SAIA…GHGI), 274 to 294 (VLRG…LVIY), 316 to 335 (GLWA…SSIM), and 407 to 427 (IVMT…RLSV).

It localises to the cell inner membrane. Functionally, involved in arsenical resistance. Thought to form the channel of an arsenite pump. This is Arsenical pump membrane protein (arsB) from Escherichia coli.